We begin with the raw amino-acid sequence, 238 residues long: UPF0280 protein Mboo_1274 (238 aa).

The protein belongs to the UPF0280 family.

This is UPF0280 protein Mboo_1274 from Methanoregula boonei (strain DSM 21154 / JCM 14090 / 6A8).